The primary structure comprises 89 residues: Alpha-latrotoxin associated low molecular weight protein SGV242-280 (89 aa).

Residues 1–18 (MSKLHFLILLSVIVSVFC) form the signal peptide.

It belongs to the arthropod CHH/MIH/GIH/VIH hormone family. In terms of tissue distribution, expressed by the venom gland.

The protein resides in the secreted. May increase the toxicity of alpha-latrotoxin and/or other venom components. Is non-toxic to mice and to the cockroach Periplaneta americana. This is Alpha-latrotoxin associated low molecular weight protein SGV242-280 from Steatoda grossa (False black widow).